Consider the following 76-residue polypeptide: DHHHSTDEPSESSKPCCDECACTKSIPPQCRCTDVRLNSCHSACSSCVCTFSIPAQCVCVDMKDFCYAPCKSSHDD.

Intrachain disulfides connect Cys16–Cys70, Cys17–Cys32, Cys20–Cys66, Cys22–Cys30, Cys40–Cys47, Cys44–Cys59, and Cys49–Cys57.

It belongs to the Bowman-Birk serine protease inhibitor family.

The protein is Bowman-Birk type proteinase inhibitor DE-3 of Macrotyloma axillare (Perennial horse gram).